The sequence spans 173 residues: Ribosomal RNA large subunit methyltransferase H (173 aa).

The S-adenosyl-L-methionine site is built by L89 and G121.

It belongs to the RNA methyltransferase RlmH family. Homodimer.

Its subcellular location is the cytoplasm. The enzyme catalyses pseudouridine(1915) in 23S rRNA + S-adenosyl-L-methionine = N(3)-methylpseudouridine(1915) in 23S rRNA + S-adenosyl-L-homocysteine + H(+). Specifically methylates the pseudouridine at position 1915 (m3Psi1915) in 23S rRNA. This Chelativorans sp. (strain BNC1) protein is Ribosomal RNA large subunit methyltransferase H.